Consider the following 319-residue polypeptide: Phospho-N-acetylmuramoyl-pentapeptide-transferase (319 aa).

9 consecutive transmembrane segments (helical) span residues 5 to 25 (LIAF…LIIW), 51 to 71 (TMGG…ICAY), 79 to 99 (VWIL…DDGL), 119 to 139 (LLVA…FALY), 149 to 169 (VVLF…AVNL), 173 to 193 (LDGL…WLAF), 197 to 217 (NFGV…FFMF), 224 to 246 (IFMG…IFLG), and 299 to 319 (VDLV…MIWG).

It belongs to the glycosyltransferase 4 family. MraY subfamily. Mg(2+) serves as cofactor.

The protein localises to the cell membrane. The catalysed reaction is UDP-N-acetyl-alpha-D-muramoyl-L-alanyl-gamma-D-glutamyl-L-lysyl-D-alanyl-D-alanine + di-trans,octa-cis-undecaprenyl phosphate = Mur2Ac(oyl-L-Ala-gamma-D-Glu-L-Lys-D-Ala-D-Ala)-di-trans,octa-cis-undecaprenyl diphosphate + UMP. Its pathway is cell wall biogenesis; peptidoglycan biosynthesis. In terms of biological role, catalyzes the initial step of the lipid cycle reactions in the biosynthesis of the cell wall peptidoglycan: transfers peptidoglycan precursor phospho-MurNAc-pentapeptide from UDP-MurNAc-pentapeptide onto the lipid carrier undecaprenyl phosphate, yielding undecaprenyl-pyrophosphoryl-MurNAc-pentapeptide, known as lipid I. The sequence is that of Phospho-N-acetylmuramoyl-pentapeptide-transferase from Lactobacillus delbrueckii subsp. bulgaricus (strain ATCC BAA-365 / Lb-18).